A 391-amino-acid polypeptide reads, in one-letter code: S-adenosylmethionine synthase (391 aa).

H14 contributes to the ATP binding site. D16 lines the Mg(2+) pocket. E42 is a binding site for K(+). Residues E55 and Q98 each coordinate L-methionine. Residues Q98–E108 form a flexible loop region. Residues D172–K174, R238–F239, D247, R253–K254, A270, and K274 each bind ATP. D247 contributes to the L-methionine binding site. K278 is a binding site for L-methionine.

It belongs to the AdoMet synthase family. In terms of assembly, homotetramer; dimer of dimers. Mg(2+) serves as cofactor. The cofactor is K(+).

It localises to the cytoplasm. It carries out the reaction L-methionine + ATP + H2O = S-adenosyl-L-methionine + phosphate + diphosphate. It participates in amino-acid biosynthesis; S-adenosyl-L-methionine biosynthesis; S-adenosyl-L-methionine from L-methionine: step 1/1. Catalyzes the formation of S-adenosylmethionine (AdoMet) from methionine and ATP. The overall synthetic reaction is composed of two sequential steps, AdoMet formation and the subsequent tripolyphosphate hydrolysis which occurs prior to release of AdoMet from the enzyme. This Clostridium acetobutylicum (strain ATCC 824 / DSM 792 / JCM 1419 / IAM 19013 / LMG 5710 / NBRC 13948 / NRRL B-527 / VKM B-1787 / 2291 / W) protein is S-adenosylmethionine synthase.